We begin with the raw amino-acid sequence, 240 residues long: Nuclear receptor-interacting protein 3 (240 aa).

This is Nuclear receptor-interacting protein 3 (NRIP3) from Pongo abelii (Sumatran orangutan).